The sequence spans 453 residues: tRNA modification GTPase MnmE (453 aa).

(6S)-5-formyl-5,6,7,8-tetrahydrofolate contacts are provided by R22, E79, and K119. The TrmE-type G domain maps to 215–376; the sequence is GMKVVIAGRP…LKAHLKSLMG (162 aa). N225 provides a ligand contact to K(+). Residues 225-230, 244-250, 269-272, and 334-337 each bind GTP; these read NAGKSS, TEIAGTT, DTAG, and NKAD. S229 lines the Mg(2+) pocket. K(+)-binding residues include T244, I246, and T249. Residue T250 coordinates Mg(2+). K453 lines the (6S)-5-formyl-5,6,7,8-tetrahydrofolate pocket.

The protein belongs to the TRAFAC class TrmE-Era-EngA-EngB-Septin-like GTPase superfamily. TrmE GTPase family. As to quaternary structure, homodimer. Heterotetramer of two MnmE and two MnmG subunits. The cofactor is K(+).

Its subcellular location is the cytoplasm. In terms of biological role, exhibits a very high intrinsic GTPase hydrolysis rate. Involved in the addition of a carboxymethylaminomethyl (cmnm) group at the wobble position (U34) of certain tRNAs, forming tRNA-cmnm(5)s(2)U34. This Shewanella loihica (strain ATCC BAA-1088 / PV-4) protein is tRNA modification GTPase MnmE.